A 226-amino-acid polypeptide reads, in one-letter code: PKHD-type hydroxylase mma_3620 (226 aa).

The Fe2OG dioxygenase domain occupies 78 to 178 (RYMPPLFNRY…RVCSFFWLQS (101 aa)). Positions 96, 98, and 159 each coordinate Fe cation. Arginine 169 is a binding site for 2-oxoglutarate.

The cofactor is Fe(2+). L-ascorbate serves as cofactor.

In Janthinobacterium sp. (strain Marseille) (Minibacterium massiliensis), this protein is PKHD-type hydroxylase mma_3620.